Consider the following 438-residue polypeptide: MAIITDVYAREVLDSRGNPTLEVEVYTESGAFGRGMVPSGASTGEHEAVELRDGDKSRYGGLGTQKAVDNVNNVIAEAIIGYDVRDQQAIDRAMIALDGTPNKGKLGANAILGVSIAVARAAADYLEVPLYSYLGGFNTKVLPTPMMNIINGGSHSDAPIAFQEFMIMPVGAPTFKEALRWGAEVFHALKKILKERGLETAVGDEGGFAPKFEGTEDGVETILKAIEAAGYEAGENGIMIGFDCASSEFYDAERKVYDYSKFEGEGGAVRTAAEQIDYLEELVNKYPIITIEDGMDENDWDGWKALTERLGGRVQLVGDDFFVTNTDYLARGIKEEAANSILIKVNQIGTLTETFEAIEMAKEAGYTAVVSHRSGETEDSTIADIAVATNAGQIKTGSLSRTDRIAKYNQLLRIEDQLGEVAQYKGIKSFYNLDKCGR.

Gln163 is a binding site for (2R)-2-phosphoglycerate. Glu205 acts as the Proton donor in catalysis. Mg(2+)-binding residues include Asp243, Glu292, and Asp319. Residues Lys344, Arg373, Ser374, and Lys395 each contribute to the (2R)-2-phosphoglycerate site. Catalysis depends on Lys344, which acts as the Proton acceptor.

The protein belongs to the enolase family. Mg(2+) serves as cofactor.

Its subcellular location is the cytoplasm. The protein resides in the secreted. The protein localises to the cell surface. The catalysed reaction is (2R)-2-phosphoglycerate = phosphoenolpyruvate + H2O. It functions in the pathway carbohydrate degradation; glycolysis; pyruvate from D-glyceraldehyde 3-phosphate: step 4/5. Functionally, catalyzes the reversible conversion of 2-phosphoglycerate (2-PG) into phosphoenolpyruvate (PEP). It is essential for the degradation of carbohydrates via glycolysis. This Streptococcus agalactiae protein is Enolase.